The primary structure comprises 492 residues: RNase aCSPSF2 (492 aa).

A divalent metal cation-binding residues include histidine 130, histidine 132, aspartate 134, histidine 135, histidine 213, aspartate 234, and histidine 460.

Belongs to the metallo-beta-lactamase superfamily. RNA-metabolizing metallo-beta-lactamase-like family. Mg(2+) is required as a cofactor.

A 5'-3' exoribonuclease, more active on 5'-monophosphorylated and 5'-hydroxylated RNA than 5'-tri-phosphorylated RNA; note there is no evidence for accumulation of 5'-monophosphorylated RNA in this organism. Translation initiation factor 2 subunit gamma but not subunit alpha protects 5'-tri-phosphorylated RNA from degradation by this enzyme. This is RNase aCSPSF2 from Saccharolobus solfataricus (strain ATCC 35092 / DSM 1617 / JCM 11322 / P2) (Sulfolobus solfataricus).